The chain runs to 98 residues: Integration host factor subunit alpha (98 aa).

The segment at 49-71 (FGNFDLRDKNQRPGRNPKTGEDI) is disordered.

This sequence belongs to the bacterial histone-like protein family. Heterodimer of an alpha and a beta chain.

In terms of biological role, this protein is one of the two subunits of integration host factor, a specific DNA-binding protein that functions in genetic recombination as well as in transcriptional and translational control. The chain is Integration host factor subunit alpha from Shewanella sp. (strain MR-4).